Here is a 310-residue protein sequence, read N- to C-terminus: Olfactory receptor 5P1 (310 aa).

Residues 1 to 25 are Extracellular-facing; that stretch reads MEPGNHTAVTKFILLGLTDDPTLCV. Asn5 carries an N-linked (GlcNAc...) asparagine glycan. A helical transmembrane segment spans residues 26-46; it reads IFFVFFLGIYIVTLVGNISII. Residues 47–54 lie on the Cytoplasmic side of the membrane; the sequence is NLVRSCPQ. Residues 55–75 form a helical membrane-spanning segment; that stretch reads LQTPMYMFLSHLAFVDIGYST. The Extracellular portion of the chain corresponds to 76 to 99; it reads SVTPIMLIGFIVHETGLPVHACEA. Cys97 and Cys189 are disulfide-bonded. Residues 100-120 form a helical membrane-spanning segment; it reads QLCSVVTFGTAECFLLAAMAY. The Cytoplasmic segment spans residues 121-133; sequence DRYVAICSPLLYS. A helical transmembrane segment spans residues 134–154; that stretch reads THMSSQICLLLVGASYVGGCV. Over 155–196 the chain is Extracellular; it reads NAWTFTGCLLSLSFCGPNKIDHFFCDFSPLLKLSCSDVSIIG. The helical transmembrane segment at 197–217 threads the bilayer; that stretch reads IIPSISAGSIIVVTVFVISVS. Topologically, residues 218–237 are cytoplasmic; it reads YIYILITILKMRSTEGRHKA. The chain crosses the membrane as a helical span at residues 238–258; sequence FSTCTSHLTAVTLYYGTITFI. Topologically, residues 259–271 are extracellular; it reads YVMPKSSYSTKQN. Residues 272 to 292 form a helical membrane-spanning segment; that stretch reads RVVSLFYTVVIPMLNPLIYSL. Residues 293–310 are Cytoplasmic-facing; the sequence is RNRDVKEALRKATLRIYS.

The protein belongs to the G-protein coupled receptor 1 family.

It localises to the cell membrane. Potential odorant receptor. The sequence is that of Olfactory receptor 5P1 from Mus musculus (Mouse).